A 121-amino-acid polypeptide reads, in one-letter code: Holin-like protein CidA 1 (121 aa).

The next 4 helical transmembrane spans lie at 7 to 24, 28 to 50, 62 to 81, and 91 to 113; these read SGQILLLFCFAWTGEWIA, HLPVPGSIIGIFLLLISLKFNLV, LLKELILFFIPSAVAVIRYR, and LILIIMISTLCVTLVTGLLTELL.

This sequence belongs to the CidA/LrgA family. CidA subfamily.

It localises to the cell membrane. Functionally, increases the activity of extracellular murein hydrolases possibly by mediating their export via hole formation. Inhibited by the antiholin-like proteins LrgAB. In an unstressed cell, the LrgAB products probably inhibit the function of the CidA protein. When a cell is stressed by the addition of antibiotics or by other factors in the environment, CidA possibly oligomerizes within the bacterial cell membrane, creating lesions that disrupt the proton motive force, which in turn results in loss of cell viability. These lesions are also hypothesized to regulate the subsequent cell lysis by either allowing the murein hydrolases access to the cell wall substrate and/or regulating their activity by a possible change in the cell wall pH that results from loss of membrane potential. This is Holin-like protein CidA 1 (cidA1) from Bacillus cereus (strain ATCC 14579 / DSM 31 / CCUG 7414 / JCM 2152 / NBRC 15305 / NCIMB 9373 / NCTC 2599 / NRRL B-3711).